The following is a 425-amino-acid chain: Dihydroorotase (425 aa).

Residues His58 and His60 each coordinate Zn(2+). Substrate is bound by residues 60 to 62 (HFR) and Asn92. Positions 150, 177, and 230 each coordinate Zn(2+). Asn276 contacts substrate. Asp303 provides a ligand contact to Zn(2+). Asp303 is a catalytic residue. Substrate contacts are provided by residues His307 and 321–322 (FG).

Belongs to the metallo-dependent hydrolases superfamily. DHOase family. Class I DHOase subfamily. Zn(2+) is required as a cofactor.

The catalysed reaction is (S)-dihydroorotate + H2O = N-carbamoyl-L-aspartate + H(+). Its pathway is pyrimidine metabolism; UMP biosynthesis via de novo pathway; (S)-dihydroorotate from bicarbonate: step 3/3. Its function is as follows. Catalyzes the reversible cyclization of carbamoyl aspartate to dihydroorotate. In Pediococcus pentosaceus (strain ATCC 25745 / CCUG 21536 / LMG 10740 / 183-1w), this protein is Dihydroorotase.